The following is a 586-amino-acid chain: Aspartate--tRNA ligase (586 aa).

An L-aspartate-binding site is contributed by Glu-171. The aspartate stretch occupies residues 195–198; that stretch reads QLFK. Arg-217 lines the L-aspartate pocket. Residues 217 to 219 and Gln-226 each bind ATP; that span reads RDE. His-448 contributes to the L-aspartate binding site. ATP is bound at residue Glu-482. Arg-489 serves as a coordination point for L-aspartate. Residue 534 to 537 participates in ATP binding; it reads GLDR.

It belongs to the class-II aminoacyl-tRNA synthetase family. Type 1 subfamily. Homodimer.

The protein resides in the cytoplasm. The catalysed reaction is tRNA(Asp) + L-aspartate + ATP = L-aspartyl-tRNA(Asp) + AMP + diphosphate. In terms of biological role, catalyzes the attachment of L-aspartate to tRNA(Asp) in a two-step reaction: L-aspartate is first activated by ATP to form Asp-AMP and then transferred to the acceptor end of tRNA(Asp). In Buchnera aphidicola subsp. Acyrthosiphon pisum (strain APS) (Acyrthosiphon pisum symbiotic bacterium), this protein is Aspartate--tRNA ligase.